We begin with the raw amino-acid sequence, 157 residues long: uncharacterized protein (157 aa).

It belongs to the mimivirus L242/L243 family.

This is an uncharacterized protein from Acanthamoeba polyphaga (Amoeba).